Consider the following 198-residue polypeptide: Density-regulated protein (198 aa).

Residues 76 to 110 (QETGTVEGQATSGEEEEKKKQKRGGRGQIKQKKKT) are disordered. A compositionally biased stretch (polar residues) spans 77-87 (ETGTVEGQATS). A compositionally biased stretch (basic residues) spans 95–110 (KQKRGGRGQIKQKKKT). An SUI1 domain is found at 115 to 182 (ITIAKIPRAK…DIIDVIQEKW (68 aa)).

It belongs to the DENR family.

Its function is as follows. May be involved in the translation of target mRNAs by scanning and recognition of the initiation codon. Involved in translation initiation; promotes recruitment of aminoacetyled initiator tRNA to P site of 40S ribosomes. Can promote release of deacylated tRNA and mRNA from recycled 40S subunits following ABCE1-mediated dissociation of post-termination ribosomal complexes into subunits. This chain is Density-regulated protein (denr), found in Xenopus laevis (African clawed frog).